A 774-amino-acid polypeptide reads, in one-letter code: Ion-translocating oxidoreductase complex subunit C (774 aa).

2 4Fe-4S ferredoxin-type domains span residues 368–398 (ELTS…QQLQ) and 408–437 (KCEE…VQYY). [4Fe-4S] cluster is bound by residues Cys378, Cys381, Cys384, Cys388, Cys417, Cys420, Cys423, and Cys427. A compositionally biased stretch (basic and acidic residues) spans 459-490 (ARFEEKKARMERDKAERENRFKQAAEDRRKEM). Disordered stretches follow at residues 459–496 (ARFE…QGGS) and 533–774 (AKQA…EEKD). A compositionally biased stretch (low complexity) spans 533–545 (AKQAEAAQSGASE). Residues 550–572 (EMAKLREERKRQARERKAQKGEV) are compositionally biased toward basic and acidic residues. The segment covering 605–618 (TESAAQPAQATPSS) has biased composition (low complexity). 4 stretches are compositionally biased toward polar residues: residues 645 to 658 (TEST…TPSS), 686 to 698 (ESAA…TPSS), 725 to 738 (TESA…TPSS), and 762 to 774 (QQSS…EEKD).

Belongs to the 4Fe4S bacterial-type ferredoxin family. RnfC subfamily. The complex is composed of six subunits: RnfA, RnfB, RnfC, RnfD, RnfE and RnfG. The cofactor is [4Fe-4S] cluster.

It localises to the cell inner membrane. Part of a membrane-bound complex that couples electron transfer with translocation of ions across the membrane. In Vibrio cholerae serotype O1 (strain ATCC 39315 / El Tor Inaba N16961), this protein is Ion-translocating oxidoreductase complex subunit C.